A 338-amino-acid chain; its full sequence is uncharacterized protein (338 aa).

Residues H144–S321 form the TNase-like domain. Active-site residues include R228, E236, and R270.

This is an uncharacterized protein from Capnoides sempervirens (Rock-harlequin).